We begin with the raw amino-acid sequence, 603 residues long: Mono(2-hydroxyethyl) terephthalate hydrolase (603 aa).

An N-terminal signal peptide occupies residues 1–17 (MQTTVTTMLLASVALAA). C18 carries N-palmitoyl cysteine lipidation. Residue C18 is the site of S-diacylglycerol cysteine attachment. Positions 24–44 (TPLPLPQQQPPQQEPPPPPVP) are disordered. Over residues 26 to 44 (LPLPQQQPPQQEPPPPPVP) the composition is skewed to pro residues. The cysteines at positions 51 and 92 are disulfide-linked. G132 contacts 4-[(2-hydroxyethoxy)carbonyl]benzoate. Disulfide bonds link C224/C529, C303/C320, C340/C348, and C577/C599. S225 (acyl-ester intermediate) is an active-site residue. E226 serves as a coordination point for 4-[(2-hydroxyethoxy)carbonyl]benzoate. Residues D304, D307, L309, D311, and I313 each coordinate Ca(2+). Positions 411 and 416 each coordinate 4-[(2-hydroxyethoxy)carbonyl]benzoate. Active-site charge relay system residues include D492 and H528. H528 provides a ligand contact to 4-[(2-hydroxyethoxy)carbonyl]benzoate.

Belongs to the tannase family.

It localises to the cell outer membrane. It carries out the reaction 4-[(2-hydroxyethoxy)carbonyl]benzoate + H2O = terephthalate + ethylene glycol + H(+). Involved in the degradation and assimilation of the plastic poly(ethylene terephthalate) (PET), which allows I.sakaiensis to use PET as its major energy and carbon source for growth. Likely acts synergistically with PETase to depolymerize PET. Catalyzes the hydrolysis of mono(2-hydroxyethyl) terephthalate (MHET) into its two environmentally benign monomers, terephthalate and ethylene glycol. Does not show activity against PET, bis(hydroxyethyl) terephthalate (BHET), pNP-aliphatic esters or typical aromatic ester compounds catalyzed by the tannase family enzymes, such as ethyl gallate and ethyl ferulate. In Piscinibacter sakaiensis (Ideonella sakaiensis), this protein is Mono(2-hydroxyethyl) terephthalate hydrolase.